The sequence spans 584 residues: UvrABC system protein C (584 aa).

One can recognise a GIY-YIG domain in the interval 14 to 91 (HKPGCYLWKD…IKTHLPKYNI (78 aa)). Residues 192–227 (DHILMILQTKEQHAVTKLDFENAQKYAEQQKALTSI) form the UVR domain.

Belongs to the UvrC family. Interacts with UvrB in an incision complex.

Its subcellular location is the cytoplasm. In terms of biological role, the UvrABC repair system catalyzes the recognition and processing of DNA lesions. UvrC both incises the 5' and 3' sides of the lesion. The N-terminal half is responsible for the 3' incision and the C-terminal half is responsible for the 5' incision. In Ureaplasma parvum serovar 3 (strain ATCC 27815 / 27 / NCTC 11736), this protein is UvrABC system protein C.